A 149-amino-acid polypeptide reads, in one-letter code: Large ribosomal subunit protein uL15 (149 aa).

The interval 21–54 (RGSASGLGCTSGKGNKGQNARSGGGVRPGFEGGQ) is disordered. Composition is skewed to gly residues over residues 23–35 (SASG…GKGN) and 42–52 (SGGGVRPGFEG).

Belongs to the universal ribosomal protein uL15 family. In terms of assembly, part of the 50S ribosomal subunit.

Functionally, binds to the 23S rRNA. In Lawsonia intracellularis (strain PHE/MN1-00), this protein is Large ribosomal subunit protein uL15.